A 308-amino-acid polypeptide reads, in one-letter code: Methionyl-tRNA formyltransferase (308 aa).

Residue 110-113 (SLLP) coordinates (6S)-5,6,7,8-tetrahydrofolate.

The protein belongs to the Fmt family.

The catalysed reaction is L-methionyl-tRNA(fMet) + (6R)-10-formyltetrahydrofolate = N-formyl-L-methionyl-tRNA(fMet) + (6S)-5,6,7,8-tetrahydrofolate + H(+). In terms of biological role, attaches a formyl group to the free amino group of methionyl-tRNA(fMet). The formyl group appears to play a dual role in the initiator identity of N-formylmethionyl-tRNA by promoting its recognition by IF2 and preventing the misappropriation of this tRNA by the elongation apparatus. The chain is Methionyl-tRNA formyltransferase from Mycobacterium sp. (strain KMS).